The primary structure comprises 763 residues: ATP-dependent RNA helicase SUV3 homolog, mitochondrial (763 aa).

Residues 1 to 43 constitute a mitochondrion transit peptide; it reads MQNCRRCISLTGLLRMTLYLRPSFSIDLSLRRLHRAAFLFSRK. One can recognise a Helicase ATP-binding domain in the interval 181-321; the sequence is NARAITRKIV…ALDLLQKICE (141 aa). 194–201 contributes to the ATP binding site; it reads GPTNSGKT. One can recognise a Helicase C-terminal domain in the interval 330-508; the sequence is RLYDRLTELT…PTADQIELYA (179 aa). Residues 724-763 form a disordered region; sequence AQQLGKSNSQSNENSEPVVNSDDEDNYSGIGRKTRKKRRK. Residues 727–741 are compositionally biased toward polar residues; sequence LGKSNSQSNENSEPV.

The protein belongs to the helicase family. Requires Mg(2+) as cofactor. The cofactor is Mn(2+).

The protein resides in the mitochondrion. The enzyme catalyses ATP + H2O = ADP + phosphate + H(+). In terms of biological role, major helicase player in mitochondrial RNA metabolism and maintenance. Likely component of the mitochondrial degradosome (mtEXO) complex, that degrades 3' overhang double-stranded RNA with a 3'-to-5' directionality in an ATP-dependent manner. ATPase and ATP-dependent multisubstrate helicase, able to unwind double-stranded (ds) DNA and RNA, and RNA/DNA heteroduplexes in the 5'-to-3' direction. Regulates mRNA stability and is required for the correct processing and maturation of mitochondrial transcripts. The protein is ATP-dependent RNA helicase SUV3 homolog, mitochondrial of Drosophila melanogaster (Fruit fly).